The sequence spans 219 residues: Hemolysin-3 (219 aa).

Transmembrane regions (helical) follow at residues 19-39, 49-69, 83-103, 112-132, 138-158, 165-185, and 194-214; these read AITH…LIIH, VVAF…STLL, ILDH…FLLI, TLLA…IFFV, ASTL…KPLY, GFSL…FFLW, and IWHL…LFYV.

This sequence belongs to the UPF0073 (Hly-III) family.

It localises to the cell membrane. Functionally, might be virulent against a mammalian host; when expressed in E.coli, the soluble extract has hemolytic activity on human erythrocytes. The activity is not inhibited by cholesterol or activated by 2-mercaptoethanol. Might be pore-forming protein. Its in vivo role in virulence is untested, nor has it been shown to be secreted by B.cereus. The polypeptide is Hemolysin-3 (Bacillus cereus).